The primary structure comprises 151 residues: Large ribosomal subunit protein bL9 (151 aa).

This sequence belongs to the bacterial ribosomal protein bL9 family.

Functionally, binds to the 23S rRNA. The polypeptide is Large ribosomal subunit protein bL9 (Chlorobium chlorochromatii (strain CaD3)).